A 333-amino-acid polypeptide reads, in one-letter code: MPDRSLPPAQRALFDALLDHGLSEWVARLPAQLADGLDRKRFGDLPAWEKAVAKLPTLPEARDVALDSDSVRVDLALTESQQRQCENLLRKLMPWRKGPYTLGGIHIDTEWRSDWKWQRVAPHLSPLEGRRVLDVGGGNGYHGWRMVGAGAAFVLIVDPSPRFYYQFQAVRHFVGDADGWRTHFLPVGIEAVPPKLEAFDTTFSMGVLYHRPSPLEHLMQLRDTLRPGGELVLETLVVEGDANTVFMPGERYAAMPNVYFLPSSKALAHWLERCGFEDVRVVDEAPTSLAEQRSTEWMTFHSLADFLDPEDATLTLEGYPAPRRAVLVARKPE.

Residues K97, W111, K116, G136, 158–160 (DPS), 189–190 (IE), M205, Y209, and R324 each bind carboxy-S-adenosyl-L-methionine.

Belongs to the class I-like SAM-binding methyltransferase superfamily. CmoB family. As to quaternary structure, homotetramer.

It carries out the reaction carboxy-S-adenosyl-L-methionine + 5-hydroxyuridine(34) in tRNA = 5-carboxymethoxyuridine(34) in tRNA + S-adenosyl-L-homocysteine + H(+). In terms of biological role, catalyzes carboxymethyl transfer from carboxy-S-adenosyl-L-methionine (Cx-SAM) to 5-hydroxyuridine (ho5U) to form 5-carboxymethoxyuridine (cmo5U) at position 34 in tRNAs. This chain is tRNA U34 carboxymethyltransferase, found in Chromohalobacter salexigens (strain ATCC BAA-138 / DSM 3043 / CIP 106854 / NCIMB 13768 / 1H11).